We begin with the raw amino-acid sequence, 150 residues long: Large ribosomal subunit protein bL9 (150 aa).

It belongs to the bacterial ribosomal protein bL9 family.

Binds to the 23S rRNA. The protein is Large ribosomal subunit protein bL9 of Leuconostoc mesenteroides subsp. mesenteroides (strain ATCC 8293 / DSM 20343 / BCRC 11652 / CCM 1803 / JCM 6124 / NCDO 523 / NBRC 100496 / NCIMB 8023 / NCTC 12954 / NRRL B-1118 / 37Y).